The primary structure comprises 181 residues: ATP synthase subunit b (181 aa).

Residues 23 to 43 (FIHIPTFIYTALNLVILYFIL) form a helical membrane-spanning segment.

This sequence belongs to the ATPase B chain family. F-type ATPases have 2 components, F(1) - the catalytic core - and F(0) - the membrane proton channel. F(1) has five subunits: alpha(3), beta(3), gamma(1), delta(1), epsilon(1). F(0) has three main subunits: a(1), b(2) and c(10-14). The alpha and beta chains form an alternating ring which encloses part of the gamma chain. F(1) is attached to F(0) by a central stalk formed by the gamma and epsilon chains, while a peripheral stalk is formed by the delta and b chains.

It localises to the cell membrane. In terms of biological role, f(1)F(0) ATP synthase produces ATP from ADP in the presence of a proton or sodium gradient. F-type ATPases consist of two structural domains, F(1) containing the extramembraneous catalytic core and F(0) containing the membrane proton channel, linked together by a central stalk and a peripheral stalk. During catalysis, ATP synthesis in the catalytic domain of F(1) is coupled via a rotary mechanism of the central stalk subunits to proton translocation. Functionally, component of the F(0) channel, it forms part of the peripheral stalk, linking F(1) to F(0). This Acetivibrio thermocellus (strain ATCC 27405 / DSM 1237 / JCM 9322 / NBRC 103400 / NCIMB 10682 / NRRL B-4536 / VPI 7372) (Clostridium thermocellum) protein is ATP synthase subunit b.